The sequence spans 932 residues: Beta-mannosidase A (932 aa).

The first 19 residues, 1 to 19, serve as a signal peptide directing secretion; it reads MRVPAQATIAVLASAVSSP. N-linked (GlcNAc...) asparagine glycans are attached at residues Asn-41, Asn-81, Asn-94, Asn-249, Asn-261, Asn-284, Asn-289, Asn-318, and Asn-348. The active-site Proton donor is Glu-480. Residues Asn-538, Asn-551, Asn-609, Asn-624, Asn-632, Asn-659, Asn-739, and Asn-791 are each glycosylated (N-linked (GlcNAc...) asparagine).

This sequence belongs to the glycosyl hydrolase 2 family. Beta-mannosidase A subfamily. As to quaternary structure, homodimer.

It localises to the secreted. The catalysed reaction is Hydrolysis of terminal, non-reducing beta-D-mannose residues in beta-D-mannosides.. The protein operates within glycan metabolism; N-glycan degradation. Its function is as follows. Exoglycosidase that cleaves the single beta-linked mannose residue from the non-reducing end of beta-mannosidic oligosaccharides of various complexity and length. Involved in the degradation of polymeric mannan and galactomannan. This is Beta-mannosidase A (mndA) from Aspergillus terreus (strain NIH 2624 / FGSC A1156).